A 415-amino-acid polypeptide reads, in one-letter code: Isocitrate dehydrogenase [NADP] (415 aa).

NADP(+) contacts are provided by residues 77–79 and R84; that span reads TIT. Substrate is bound at residue T79. Residues 96–102, R111, and R134 each bind substrate; that span reads SPNGTIR. D254 serves as a coordination point for Mn(2+). K262 is a binding site for NADP(+). Position 277 (D277) interacts with Mn(2+). Residues 312–317 and N330 contribute to the NADP(+) site; that span reads GTVTRH.

Belongs to the isocitrate and isopropylmalate dehydrogenases family. As to quaternary structure, heterodimer. The cofactor is Mg(2+). Mn(2+) serves as cofactor.

The protein localises to the cytoplasm. The enzyme catalyses D-threo-isocitrate + NADP(+) = 2-oxoglutarate + CO2 + NADPH. Its function is as follows. May supply 2-oxoglutarate for amino acid biosynthesis and ammonia assimilation via the glutamine synthetase/glutamate synthase (GS/GOGAT) pathway. This chain is Isocitrate dehydrogenase [NADP], found in Nicotiana tabacum (Common tobacco).